The primary structure comprises 146 residues: 3-hydroxyacyl-[acyl-carrier-protein] dehydratase FabZ (146 aa).

The active site involves His47.

It belongs to the thioester dehydratase family. FabZ subfamily.

The protein localises to the cytoplasm. The catalysed reaction is a (3R)-hydroxyacyl-[ACP] = a (2E)-enoyl-[ACP] + H2O. Its function is as follows. Involved in unsaturated fatty acids biosynthesis. Catalyzes the dehydration of short chain beta-hydroxyacyl-ACPs and long chain saturated and unsaturated beta-hydroxyacyl-ACPs. The chain is 3-hydroxyacyl-[acyl-carrier-protein] dehydratase FabZ from Nitrosospira multiformis (strain ATCC 25196 / NCIMB 11849 / C 71).